The chain runs to 985 residues: MASNPDRGEILLTELQVDSRPLPFSENVSAVQKLDFSDTIVQQKLDDVKDRIKREIRKELKIKEGAENLRKVTTDKKNLAYVDNILKKSNKKLEELHHKLQELNAHIVVSDPEDYTDCPRTPDTPNSDSRSSTSNNRRLMALQKQLDIELKVKQGAENMIQMYSNGPSKDRKLHGTAQQLLQDNKTKIEVIRMHILQAVLTNELAFDNAKPVISPLELRNGRIIEHHFRIEFAVAEGAKNVMKLLGSGKVTDRKALSEAQARFNESSQKLDLLKYSLEQRLNELPKNHPKSSVVIEELSLVASPTLSPRQSMLSTQNQYSTLSKPAALTGTLEVRLWGAKISWENVPGRSKATSVALPGWSPSENRSSFMSRTSKSKSGSSRNLLKTDDLSNDVCAVLKLDNTVVGQTIWKPISNQSWDQKFTLELDRSRELEISVYWRDWRSLCAVKFLRLEDFLDNQRHGMALYLEPQGTLFAEVTFFNPVIERRPKLQRQKKIFSKQQGKTFLRAPQMNINIATWGRLVRRAIPTVNHSGTFSPQTPVPATVPVVDARTPELAPPASDSTVTKLDFDLEPEAPPAPPRASSLGEIDDSSELRVLDIPGQGSETVFDIENDRNNMRPKSKSEYELNIPDSSRSCWSVGELEDKRSQQRFQFNLQDFRCCAVLGRGHFGKVLLAEYKHTNEMFAIKALKKGDIVARDEVDSLMCEKRIFETVNSVRHPFLVNLFACFQTKEHVCFVMEYAAGGDLMMHIHTDVFSEPRAVFYAACVVLGLQYLHEHKIVYRDLKLDNLLLDTEASVKIADFGLCKEGMGYGDRTSTFCGTPEFLAPEVLTETSYTRAVDWWGLGVLIYEMLVGESPFPGDDEEEVFDSIVNDEVRYPRFLSTEAISIMRRLLRRNPERRLGAGEKDAEDVKKHPFFRLTDWSALLDKKVKPPFVPTIRGREDVSNFDDEFTSEAPILTPPREPRILLEEEQEMFRDFDYVADWC.

An REM-1 1 domain is found at Lys-33 to Val-109. Residue Lys-77 is modified to N6-acetyllysine. Ser-110 is modified (phosphoserine). The disordered stretch occupies residues Asp-111–Asn-136. Residues Thr-121 and Thr-124 each carry the phosphothreonine modification. Residues Thr-121–Asn-136 are compositionally biased toward low complexity. REM-1 domains lie at Thr-121 to Leu-204 and Asp-207 to Lys-286. Ser-303, Ser-307, Ser-361, and Ser-363 each carry phosphoserine. Positions Ala-352 to Asn-383 are disordered. A C2 domain is found at Ser-354 to Phe-474. A compositionally biased stretch (low complexity) spans Arg-366 to Arg-382. A necessary to rescue apical junction formation region spans residues Asn-383–Ala-464. A phosphoserine mark is found at Ser-536, Ser-584, Ser-621, and Ser-632. The segment at Asp-570–Asp-590 is disordered. Positions Phe-658 to Phe-917 constitute a Protein kinase domain. ATP contacts are provided by residues Leu-664 to Val-672 and Lys-687. Residue Asp-783 is the Proton acceptor of the active site. Thr-817 carries the post-translational modification Phosphothreonine; by PDPK1. Residues Arg-918–Phe-978 are necessary for the catalytic activity. The AGC-kinase C-terminal domain occupies Arg-918–Cys-985. Position 953 is a phosphoserine (Ser-953). The residue at position 959 (Thr-959) is a Phosphothreonine. Residues Asp-979 to Cys-985 form a negatively regulates the responsiveness of the catalytic activity by cardiolipin and is required for optimal activation by the GTP-bound RhoA region.

Belongs to the protein kinase superfamily. AGC Ser/Thr protein kinase family. PKC subfamily. As to quaternary structure, interacts (via the REM repeats) with RHOA (GTP-bound form preferentially) and interacts (via the REM repeats) with RAC1 (GTP-bound form preferentially); the interactions induce its autophosphorylation. Interacts with RHOC. Interacts with NCK1 (via SH3 domains) and NCK2. Interacts with CD44. Interacts (via C-terminal kinase domain) with PDPK1; the interaction stimulates PDPK1 kinase activity. Interacts with MAP3K2; the interaction activates PRK2 kinase activity in a MAP3K2-independent kinase activity. Interacts (via C-terminal domain) with AKT1; the interaction occurs with the C-terminal cleavage product of PRK2 in apoptotic cells. Interacts (via C-terminus) with PTPN13 (via PDZ 3 domain). Interacts with CDK10. Post-translationally, phosphorylated during mitosis. Autophosphorylated. Phosphorylated. Binding to Rho and Rac promotes autophosphorylation and phosphorylation on serine and threonine residues. Phosphorylated by CDK10. Proteolytically cleaved by caspase-3 during the induction of apoptotic cell death. Activated by limited proteolysis with trypsin. As to expression, expressed in liver (at protein level).

It localises to the cytoplasm. Its subcellular location is the nucleus. The protein resides in the membrane. It is found in the cell projection. The protein localises to the lamellipodium. It localises to the cytoskeleton. Its subcellular location is the cleavage furrow. The protein resides in the midbody. It is found in the cell junction. The catalysed reaction is L-seryl-[protein] + ATP = O-phospho-L-seryl-[protein] + ADP + H(+). It carries out the reaction L-threonyl-[protein] + ATP = O-phospho-L-threonyl-[protein] + ADP + H(+). With respect to regulation, kinase activity is activated upon binding to GTP-bound Rho1/Rac1 GTPases. Activated by caspase-3 (CASP3) cleavage during apoptosis. Activated by lipids, particularly cardiolipin and to a lesser extent by other acidic phospholipids and unsaturated fatty acids. Two specific sites, Thr-817 (activation loop of the kinase domain) and Thr-959 (turn motif), need to be phosphorylated for its full activation. Its function is as follows. PKC-related serine/threonine-protein kinase and Rho/Rac effector protein that participates in specific signal transduction responses in the cell. Plays a role in the regulation of cell cycle progression, actin cytoskeleton assembly, cell migration, cell adhesion, tumor cell invasion and transcription activation signaling processes. Phosphorylates CTTN in hyaluronan-induced astrocytes and hence decreases CTTN ability to associate with filamentous actin. Phosphorylates HDAC5, therefore lead to impair HDAC5 import. Direct RhoA target required for the regulation of the maturation of primordial junctions into apical junction formation in bronchial epithelial cells. Required for G2/M phases of the cell cycle progression and abscission during cytokinesis in a ECT2-dependent manner. Stimulates FYN kinase activity that is required for establishment of skin cell-cell adhesion during keratinocytes differentiation. Regulates epithelial bladder cells speed and direction of movement during cell migration and tumor cell invasion. Inhibits Akt pro-survival-induced kinase activity. Mediates Rho protein-induced transcriptional activation via the c-fos serum response factor (SRF). Involved in the negative regulation of ciliogenesis. This chain is Serine/threonine-protein kinase N2 (Pkn2), found in Rattus norvegicus (Rat).